The following is a 112-amino-acid chain: Hydrogenase maturation factor HypA (112 aa).

His-2 is a binding site for Ni(2+). Positions 73, 76, 88, and 91 each coordinate Zn(2+).

It belongs to the HypA/HybF family.

Functionally, involved in the maturation of [NiFe] hydrogenases. Required for nickel insertion into the metal center of the hydrogenase. In Synechococcus elongatus (strain ATCC 33912 / PCC 7942 / FACHB-805) (Anacystis nidulans R2), this protein is Hydrogenase maturation factor HypA.